The sequence spans 521 residues: Cyclic AMP-responsive element-binding protein 3-like protein 2 (521 aa).

Topologically, residues 1–378 (MEVLESGEQS…CKLAGTQTGT (378 aa)) are cytoplasmic. Over residues 83–103 (YSLSEEPRTQSPFTHAATSDS) the composition is skewed to polar residues. The interval 83–106 (YSLSEEPRTQSPFTHAATSDSFND) is disordered. Phosphoserine is present on Ser-93. Lys-178 participates in a covalent cross-link: Glycyl lysine isopeptide (Lys-Gly) (interchain with G-Cter in SUMO2). Ser-191 is subject to Phosphoserine. The tract at residues 196–264 (SVDQLHLPPT…PHKLQGSGPL (69 aa)) is disordered. The span at 208-220 (SSHSSDSEGSLSP) shows a compositional bias: low complexity. The 64-residue stretch at 294–357 (ALKKIRRKIK…RTLLQQLQKL (64 aa)) folds into the bZIP domain. The tract at residues 296–325 (KKIRRKIKNKISAQESRRKKKEYMDSLEKK) is basic motif. The interval 336-357 (LRKKVEVLENTNRTLLQQLQKL) is leucine-zipper. A helical; Signal-anchor for type II membrane protein transmembrane segment spans residues 379–399 (CLMVVVLCFAVAFGSFFQGYG). Residues 400–521 (PYPSATKMAL…ELERRVNATF (122 aa)) lie on the Lumenal side of the membrane. The short motif at 427–430 (RNLL) is the S1P recognition element. N-linked (GlcNAc...) asparagine glycosylation is found at Asn-481, Asn-505, and Asn-518.

This sequence belongs to the bZIP family. ATF subfamily. Binds DNA as a dimer. Upon ER stress, translocated to the Golgi apparatus, where it is processed by regulated intramembrane proteolysis (RIP) to release the cytosol-facing N-terminal transcription factor domain. The cleavage is performed sequentially by site-1 and site-2 proteases (S1P/MBTPS1 and S2P/MBTPS2). Post-translationally, N-glycosylated. In terms of processing, ubiquitinated by HRD1/SYVN1; undergoes 'Lys-48'-linked ubiquitination, followed by rapid proteasomal degradation under normal conditions. Upon ER stress, SYVN1 E3 ubiquitin-protein ligase dissociates from its substrate, ubiquitination does not occur and CREB3L2 is stabilized. As to expression, widely expressed, including in lung, bladder, ovary, testis and spleen. Highly expressed in chondrocytes.

It localises to the endoplasmic reticulum membrane. Its subcellular location is the nucleus. Its function is as follows. Transcription factor involved in unfolded protein response (UPR). In the absence of endoplasmic reticulum (ER) stress, inserted into ER membranes, with N-terminal DNA-binding and transcription activation domains oriented toward the cytosolic face of the membrane. In response to ER stress, transported to the Golgi, where it is cleaved in a site-specific manner by resident proteases S1P/MBTPS1 and S2P/MBTPS2. The released N-terminal cytosolic domain is translocated to the nucleus to effect transcription of specific target genes. Plays a critical role in chondrogenesis by activating the transcription of SEC23A, which promotes the transport and secretion of cartilage matrix proteins, and possibly that of ER biogenesis-related genes. In a neuroblastoma cell line, protects cells from ER stress-induced death. In vitro activates transcription of target genes via direct binding to the CRE site. This chain is Cyclic AMP-responsive element-binding protein 3-like protein 2 (Creb3l2), found in Mus musculus (Mouse).